Here is a 139-residue protein sequence, read N- to C-terminus: Small ribosomal subunit protein bS6 (139 aa).

The tract at residues 120–139 (KGASKVETPTGPESTDIQEK) is disordered. Residues 130 to 139 (GPESTDIQEK) show a composition bias toward polar residues.

This sequence belongs to the bacterial ribosomal protein bS6 family.

Binds together with bS18 to 16S ribosomal RNA. In Borreliella burgdorferi (strain ATCC 35210 / DSM 4680 / CIP 102532 / B31) (Borrelia burgdorferi), this protein is Small ribosomal subunit protein bS6 (rpsF).